The sequence spans 192 residues: GTP cyclohydrolase-2 (192 aa).

A GTP-binding site is contributed by 47–51 (RIHSE). 3 residues coordinate Zn(2+): C52, C63, and C65. Residues Q68, 90–92 (EGR), and T112 contribute to the GTP site. The active-site Proton acceptor is the D124. The active-site Nucleophile is the R126. T147 and K152 together coordinate GTP.

It belongs to the GTP cyclohydrolase II family. Zn(2+) is required as a cofactor.

It catalyses the reaction GTP + 4 H2O = 2,5-diamino-6-hydroxy-4-(5-phosphoribosylamino)-pyrimidine + formate + 2 phosphate + 3 H(+). The protein operates within cofactor biosynthesis; riboflavin biosynthesis; 5-amino-6-(D-ribitylamino)uracil from GTP: step 1/4. Functionally, catalyzes the conversion of GTP to 2,5-diamino-6-ribosylamino-4(3H)-pyrimidinone 5'-phosphate (DARP), formate and pyrophosphate. The polypeptide is GTP cyclohydrolase-2 (Picrophilus torridus (strain ATCC 700027 / DSM 9790 / JCM 10055 / NBRC 100828 / KAW 2/3)).